Here is a 198-residue protein sequence, read N- to C-terminus: NAD(P)H dehydrogenase (quinone) (198 aa).

In terms of domain architecture, Flavodoxin-like spans 4-189; sequence VLVLYYSMYG…SIARYQGEYV (186 aa). Residues 10–15 and 78–80 each bind FMN; these read SMYGHI and TRF. Tyr12 serves as a coordination point for NAD(+). Residue Trp98 participates in substrate binding. Residues 113-118 and His133 contribute to the FMN site; that span reads STGTGG.

This sequence belongs to the WrbA family. FMN serves as cofactor.

The enzyme catalyses a quinone + NADH + H(+) = a quinol + NAD(+). It catalyses the reaction a quinone + NADPH + H(+) = a quinol + NADP(+). The polypeptide is NAD(P)H dehydrogenase (quinone) (Shigella dysenteriae serotype 1 (strain Sd197)).